The following is a 362-amino-acid chain: Atypical chemokine receptor 3 (362 aa).

The Extracellular portion of the chain corresponds to 1-47; it reads MDVHLFDYAEPGNYSDINWPCNSSDCIVVDTVQCPTMPNKNVLLYTL. 2 N-linked (GlcNAc...) asparagine glycosylation sites follow: Asn-13 and Asn-22. The helical transmembrane segment at 48–68 threads the bilayer; sequence SFIYIFIFVIGMIANSVVVWV. At 69 to 81 the chain is on the cytoplasmic side; sequence NIQAKTTGYDTHC. The helical transmembrane segment at 82–102 threads the bilayer; the sequence is YILNLAIADLWVVITIPVWVV. Topologically, residues 103 to 118 are extracellular; that stretch reads SLVQHNQWPMGELTCK. Residues Cys-117 and Cys-196 are joined by a disulfide bond. Residues 119–139 traverse the membrane as a helical segment; it reads ITHLIFSINLFGSIFFLACMS. Topologically, residues 140–162 are cytoplasmic; sequence VDRYLSITYFTGTSSYKKKMVRR. Residues 163-183 traverse the membrane as a helical segment; sequence VVCILVWLLAFFVSLPDTYYL. At 184 to 213 the chain is on the extracellular side; sequence KTVTSASNNETYCRSFYPEHSIKEWLIGME. A helical transmembrane segment spans residues 214–234; the sequence is LVSVILGFAVPFTIIAIFYFL. The Cytoplasmic portion of the chain corresponds to 235–252; sequence LARAMSASGDQEKHSSRK. A helical membrane pass occupies residues 253-273; that stretch reads IIFSYVVVFLVCWLPYHFVVL. The Extracellular portion of the chain corresponds to 274-296; that stretch reads LDIFSILHYIPFTCQLENVLFTA. Residues 297-319 form a helical membrane-spanning segment; the sequence is LHVTQCLSLVHCCVNPVLYSFIN. Over 320–362 the chain is Cytoplasmic; sequence RNYRYELMKAFIFKYSAKTGLTKLIDASRVSETEYSALEQNTK. The interval 324–362 is C-terminal cytoplasmic tail; sequence YELMKAFIFKYSAKTGLTKLIDASRVSETEYSALEQNTK. Phosphoserine occurs at positions 347, 350, and 355.

It belongs to the G-protein coupled receptor 1 family. Atypical chemokine receptor subfamily. In terms of assembly, homodimer. Can form heterodimers with CXCR4; heterodimerization may regulate CXCR4 signaling activity. Interacts with ARRB1 and ARRB2. The Ser/Thr residues in the C-terminal cytoplasmic tail may be phosphorylated. Post-translationally, ubiquitinated at the Lys residues in its C-terminal cytoplasmic tail and is essential for correct trafficking from and to the cell membrane. Deubiquitinated by CXCL12-stimulation in a reversible manner. As to expression, not detected in blood, liver, lung and heart, but high expression detected in several tumor cell lines (at protein level). Expressed in heart, spleen, kidney, lung, ovary, brain, testis, astrocytes, neutrophils and B-lymphocytes.

The protein localises to the cell membrane. Its subcellular location is the early endosome. It is found in the recycling endosome. Its function is as follows. Atypical chemokine receptor that controls chemokine levels and localization via high-affinity chemokine binding that is uncoupled from classic ligand-driven signal transduction cascades, resulting instead in chemokine sequestration, degradation, or transcytosis. Also known as interceptor (internalizing receptor) or chemokine-scavenging receptor or chemokine decoy receptor. Acts as a receptor for chemokines CXCL11 and CXCL12/SDF1. Chemokine binding does not activate G-protein-mediated signal transduction but instead induces beta-arrestin recruitment, leading to ligand internalization and activation of MAPK signaling pathway. Required for regulation of CXCR4 protein levels in migrating interneurons, thereby adapting their chemokine responsiveness. In glioma cells, transduces signals via MEK/ERK pathway, mediating resistance to apoptosis. Promotes cell growth and survival. Not involved in cell migration, adhesion or proliferation of normal hematopoietic progenitors but activated by CXCL11 in malignant hemapoietic cells, leading to phosphorylation of ERK1/2 (MAPK3/MAPK1) and enhanced cell adhesion and migration. Plays a regulatory role in CXCR4-mediated activation of cell surface integrins by CXCL12. Required for heart valve development. Regulates axon guidance in the oculomotor system through the regulation of CXCL12 levels. The chain is Atypical chemokine receptor 3 from Mus musculus (Mouse).